The sequence spans 211 residues: Protein-methionine-sulfoxide reductase heme-binding subunit MsrQ (211 aa).

The next 5 helical transmembrane spans lie at 10-30 (WLKVCLHLAGLLPFLWLVWAI), 82-102 (LWCFAWATLHLTSYALLELGV), 116-136 (PYLTLGIISWVILLALAFTST), 153-173 (FVYLVAILAPIHYLWSVKIIS), and 178-198 (IYAGLAVLLLALRYKKLLSLF).

This sequence belongs to the MsrQ family. In terms of assembly, heterodimer of a catalytic subunit (MsrP) and a heme-binding subunit (MsrQ). Requires FMN as cofactor. It depends on heme b as a cofactor.

It localises to the cell inner membrane. Its function is as follows. Part of the MsrPQ system that repairs oxidized periplasmic proteins containing methionine sulfoxide residues (Met-O), using respiratory chain electrons. Thus protects these proteins from oxidative-stress damage caused by reactive species of oxygen and chlorine generated by the host defense mechanisms. MsrPQ is essential for the maintenance of envelope integrity under bleach stress, rescuing a wide series of structurally unrelated periplasmic proteins from methionine oxidation, including the primary periplasmic chaperone SurA and the lipoprotein Pal. MsrQ provides electrons for reduction to the reductase catalytic subunit MsrP, using the quinone pool of the respiratory chain. The protein is Protein-methionine-sulfoxide reductase heme-binding subunit MsrQ of Escherichia coli (strain 55989 / EAEC).